A 137-amino-acid chain; its full sequence is Peptide methionine sulfoxide reductase MsrB (137 aa).

The 123-residue stretch at 7–129 folds into the MsrB domain; that stretch reads PTENIEKLTD…NSASLNFVDD (123 aa). 4 residues coordinate Zn(2+): Cys46, Cys49, Cys95, and Cys98. Cys118 functions as the Nucleophile in the catalytic mechanism.

Belongs to the MsrB Met sulfoxide reductase family. Zn(2+) serves as cofactor.

The enzyme catalyses L-methionyl-[protein] + [thioredoxin]-disulfide + H2O = L-methionyl-(R)-S-oxide-[protein] + [thioredoxin]-dithiol. This Yersinia enterocolitica serotype O:8 / biotype 1B (strain NCTC 13174 / 8081) protein is Peptide methionine sulfoxide reductase MsrB.